The following is a 126-amino-acid chain: Large ribosomal subunit protein bL12 (126 aa).

The protein belongs to the bacterial ribosomal protein bL12 family. As to quaternary structure, homodimer. Part of the ribosomal stalk of the 50S ribosomal subunit. Forms a multimeric L10(L12)X complex, where L10 forms an elongated spine to which 2 to 4 L12 dimers bind in a sequential fashion. Binds GTP-bound translation factors.

In terms of biological role, forms part of the ribosomal stalk which helps the ribosome interact with GTP-bound translation factors. Is thus essential for accurate translation. The protein is Large ribosomal subunit protein bL12 of Francisella tularensis subsp. mediasiatica (strain FSC147).